A 479-amino-acid polypeptide reads, in one-letter code: ATP synthase subunit beta (479 aa).

160–167 (GGAGVGKT) serves as a coordination point for ATP.

The protein belongs to the ATPase alpha/beta chains family. As to quaternary structure, F-type ATPases have 2 components, CF(1) - the catalytic core - and CF(0) - the membrane proton channel. CF(1) has five subunits: alpha(3), beta(3), gamma(1), delta(1), epsilon(1). CF(0) has three main subunits: a(1), b(2) and c(9-12). The alpha and beta chains form an alternating ring which encloses part of the gamma chain. CF(1) is attached to CF(0) by a central stalk formed by the gamma and epsilon chains, while a peripheral stalk is formed by the delta and b chains.

The protein resides in the cell inner membrane. It catalyses the reaction ATP + H2O + 4 H(+)(in) = ADP + phosphate + 5 H(+)(out). Produces ATP from ADP in the presence of a proton gradient across the membrane. The catalytic sites are hosted primarily by the beta subunits. The sequence is that of ATP synthase subunit beta from Anaplasma phagocytophilum (strain HZ).